A 414-amino-acid chain; its full sequence is Succinylornithine transaminase (414 aa).

Lys-260 carries the N6-(pyridoxal phosphate)lysine modification.

It belongs to the class-III pyridoxal-phosphate-dependent aminotransferase family. AstC subfamily. Pyridoxal 5'-phosphate serves as cofactor.

The enzyme catalyses N(2)-succinyl-L-ornithine + 2-oxoglutarate = N-succinyl-L-glutamate 5-semialdehyde + L-glutamate. It functions in the pathway amino-acid degradation; L-arginine degradation via AST pathway; L-glutamate and succinate from L-arginine: step 3/5. Its function is as follows. Catalyzes the transamination of N(2)-succinylornithine and alpha-ketoglutarate into N(2)-succinylglutamate semialdehyde and glutamate. Can also act as an acetylornithine aminotransferase. The sequence is that of Succinylornithine transaminase from Yersinia pseudotuberculosis serotype I (strain IP32953).